Reading from the N-terminus, the 316-residue chain is Mitochondrial GTPase 1 (316 aa).

A CP-type G domain is found at Met-28–Pro-203. GTP contacts are provided by residues Asn-73–Asp-76, Asn-147–Ser-152, and Gly-199.

It belongs to the TRAFAC class YlqF/YawG GTPase family. MTG1 subfamily.

Its subcellular location is the mitochondrion inner membrane. Its function is as follows. Plays a role in the regulation of the mitochondrial ribosome assembly and of translational activity. Displays mitochondrial GTPase activity. The protein is Mitochondrial GTPase 1 of Aedes aegypti (Yellowfever mosquito).